A 447-amino-acid chain; its full sequence is Argininosuccinate synthase (447 aa).

ATP contacts are provided by residues 17–25 and Ala43; that span reads AFSGGLDTS. Tyr99 is an L-citrulline binding site. 2 residues coordinate ATP: Gly129 and Thr131. The L-aspartate site is built by Thr131, Asn135, and Asp136. Asn135 is an L-citrulline binding site. An ATP-binding site is contributed by Asp136. Residues Arg139 and Ser192 each contribute to the L-citrulline site. Position 194 (Asp194) interacts with ATP. Thr201, Glu203, and Glu280 together coordinate L-citrulline.

This sequence belongs to the argininosuccinate synthase family. Type 2 subfamily. In terms of assembly, homotetramer.

The protein resides in the cytoplasm. It catalyses the reaction L-citrulline + L-aspartate + ATP = 2-(N(omega)-L-arginino)succinate + AMP + diphosphate + H(+). Its pathway is amino-acid biosynthesis; L-arginine biosynthesis; L-arginine from L-ornithine and carbamoyl phosphate: step 2/3. In Salmonella paratyphi B (strain ATCC BAA-1250 / SPB7), this protein is Argininosuccinate synthase.